A 123-amino-acid polypeptide reads, in one-letter code: Peptide methionine sulfoxide reductase MsrA (123 aa).

Cysteine 8 is a catalytic residue.

Belongs to the MsrA Met sulfoxide reductase family.

The enzyme catalyses L-methionyl-[protein] + [thioredoxin]-disulfide + H2O = L-methionyl-(S)-S-oxide-[protein] + [thioredoxin]-dithiol. It carries out the reaction [thioredoxin]-disulfide + L-methionine + H2O = L-methionine (S)-S-oxide + [thioredoxin]-dithiol. Its function is as follows. Has an important function as a repair enzyme for proteins that have been inactivated by oxidation. Catalyzes the reversible oxidation-reduction of methionine sulfoxide in proteins to methionine. In Thermoactinomyces vulgaris, this protein is Peptide methionine sulfoxide reductase MsrA.